The chain runs to 695 residues: MFLGTGEPALDTGDDSLSAVTFDSDVETKAKRKAFHKPPPTSPKSPYLSKPRKVASWRSLRTAGSMPLGGRASLTPQKLWLGTAKPGSLTQALNSPLTWEHAWTGVPGGTPDCLTDTFRVKRPHLRRSASNGHVPGTPVYREKEDMYDEIIELKKSLHVQKSDVDLMRTKLRRLEEENSRKDRQIEQLLDPSRGTDFVRTLAEKRPDASWVINGLKQRILKLEQQCKEKDGTISKLQTDMKTTNLEEMRIAMETYYEEVHRLQTLLASSETTGKKPLGEKKTGAKRQKKMGSALLSLSRSVQELTEENQSLKEDLDRVLSTSPTISKTQGYVEWSKPRLLRRIVELEKKLSVMESSKSHAAEPVRSHPPACLASSSALHRQPRGDRNKDHERLRGAVRDLKEERTALQEQLLQRDLEVKQLLQAKADLEKELECAREGEEERREREEVLREEIQTLTSKLQELQEMKKEEKEDCPEVPHKAQELPAPTPSSRHCEQDWPPDSSEEGLPRPRSPCSDGRRDAAARVLQAQWKVYKHKKKKAVLDEAAVVLQAAFRGHLTRTKLLASKAHGSEPPSVPGLPDQSSPVPRVPSPIAQATGSPVQEEAIVIIQSALRAHLARARHSATGKRTTTAASTRRRSASATHGDASSPPFLAALPDPSPSGPQALAPLPGDDVNSDDSDDIVIAPSLPTKNFPV.

The disordered stretch occupies residues 29–55; it reads KAKRKAFHKPPPTSPKSPYLSKPRKVA. Coiled coils occupy residues 157–264, 292–358, and 387–477; these read LHVQ…RLQT, SALL…SSKS, and NKDH…CPEV. S322 carries the post-translational modification Phosphoserine. Disordered stretches follow at residues 357 to 390, 465 to 521, 564 to 599, and 618 to 695; these read KSHA…NKDH, EMKK…RRDA, ASKA…TGSP, and RARH…NFPV. Basic and acidic residues predominate over residues 465 to 482; it reads EMKKEEKEDCPEVPHKAQ. IQ domains follow at residues 542-571 and 601-630; these read LDEA…HGSE and QEEA…RTTT.

Component of the EvC complex composed of EFCAB7, IQCE, EVC2 and EVC; built from two subcomplexes, EVC2:EVC and EFCAB7:IQCE. Interacts (via N-terminus) with EFCAB7 (via EF-hands 1 and 2); this interaction anchors the EVC-EVC2 complex in a signaling microdomain at the base of cilia and stimulates the Hedgehog (Hh) pathway. Interacts with EVC2 (via N-terminal end). Interacts with EVC.

The protein resides in the cell projection. The protein localises to the cilium membrane. In terms of biological role, component of the EvC complex that positively regulates ciliary Hedgehog (Hh) signaling. Required for proper limb morphogenesis. In Homo sapiens (Human), this protein is IQ domain-containing protein E (IQCE).